Reading from the N-terminus, the 396-residue chain is uncharacterized protein (396 aa).

The next 11 membrane-spanning stretches (helical) occupy residues 7–27 (SDDV…SIGL), 36–56 (AVSG…VGVL), 62–82 (VYDT…LFQI), 94–114 (LLFI…LAFF), 159–179 (VVAD…IPAL), 218–238 (IAFN…VSGY), 250–270 (GTLG…IFLF), 285–305 (TFLI…RLIV), 310–330 (LILL…LAAG), 340–360 (ILLA…MAIA), and 367–387 (VAPI…VGTF).

It is found in the cell membrane. This is an uncharacterized protein from Bacillus subtilis (strain 168).